The chain runs to 466 residues: 3-isopropylmalate dehydratase large subunit (466 aa).

Cysteine 347, cysteine 407, and cysteine 410 together coordinate [4Fe-4S] cluster.

It belongs to the aconitase/IPM isomerase family. LeuC type 1 subfamily. Heterodimer of LeuC and LeuD. Requires [4Fe-4S] cluster as cofactor.

It carries out the reaction (2R,3S)-3-isopropylmalate = (2S)-2-isopropylmalate. It functions in the pathway amino-acid biosynthesis; L-leucine biosynthesis; L-leucine from 3-methyl-2-oxobutanoate: step 2/4. Functionally, catalyzes the isomerization between 2-isopropylmalate and 3-isopropylmalate, via the formation of 2-isopropylmaleate. The protein is 3-isopropylmalate dehydratase large subunit of Blochmanniella floridana.